The following is a 54-amino-acid chain: MARIQGGQMSPSNVSNTTFLVLPVWILCRLLSIQRVLTAKINGLPMLISPFWQP.

This is an uncharacterized protein from Saccharolobus solfataricus (Sulfolobus solfataricus).